Here is a 353-residue protein sequence, read N- to C-terminus: Methylthioribose-1-phosphate isomerase (353 aa).

Substrate contacts are provided by residues 51–53, Arg-94, and Gln-199; that span reads RGA. The active-site Proton donor is Asp-240. Residue 250-251 participates in substrate binding; it reads NK.

This sequence belongs to the eIF-2B alpha/beta/delta subunits family. MtnA subfamily. As to quaternary structure, homodimer.

It catalyses the reaction 5-(methylsulfanyl)-alpha-D-ribose 1-phosphate = 5-(methylsulfanyl)-D-ribulose 1-phosphate. Its pathway is amino-acid biosynthesis; L-methionine biosynthesis via salvage pathway; L-methionine from S-methyl-5-thio-alpha-D-ribose 1-phosphate: step 1/6. Catalyzes the interconversion of methylthioribose-1-phosphate (MTR-1-P) into methylthioribulose-1-phosphate (MTRu-1-P). The polypeptide is Methylthioribose-1-phosphate isomerase (Bacillus licheniformis (strain ATCC 14580 / DSM 13 / JCM 2505 / CCUG 7422 / NBRC 12200 / NCIMB 9375 / NCTC 10341 / NRRL NRS-1264 / Gibson 46)).